Consider the following 467-residue polypeptide: Methylenetetrahydrofolate--tRNA-(uracil-5-)-methyltransferase TrmFO (467 aa).

10 to 15 serves as a coordination point for FAD; it reads GAGLAG.

Belongs to the MnmG family. TrmFO subfamily. The cofactor is FAD.

The protein localises to the cytoplasm. The catalysed reaction is uridine(54) in tRNA + (6R)-5,10-methylene-5,6,7,8-tetrahydrofolate + NADH + H(+) = 5-methyluridine(54) in tRNA + (6S)-5,6,7,8-tetrahydrofolate + NAD(+). The enzyme catalyses uridine(54) in tRNA + (6R)-5,10-methylene-5,6,7,8-tetrahydrofolate + NADPH + H(+) = 5-methyluridine(54) in tRNA + (6S)-5,6,7,8-tetrahydrofolate + NADP(+). Catalyzes the folate-dependent formation of 5-methyl-uridine at position 54 (M-5-U54) in all tRNAs. In Prochlorococcus marinus (strain MIT 9515), this protein is Methylenetetrahydrofolate--tRNA-(uracil-5-)-methyltransferase TrmFO.